The chain runs to 527 residues: Light-independent protochlorophyllide reductase subunit B (527 aa).

[4Fe-4S] cluster is bound at residue D36. Residue D292 is the Proton donor of the active site. Residue 428 to 429 coordinates substrate; it reads GL.

This sequence belongs to the ChlB/BchB/BchZ family. In terms of assembly, protochlorophyllide reductase is composed of three subunits; BchL, BchN and BchB. Forms a heterotetramer of two BchB and two BchN subunits. It depends on [4Fe-4S] cluster as a cofactor.

The catalysed reaction is chlorophyllide a + oxidized 2[4Fe-4S]-[ferredoxin] + 2 ADP + 2 phosphate = protochlorophyllide a + reduced 2[4Fe-4S]-[ferredoxin] + 2 ATP + 2 H2O. It participates in porphyrin-containing compound metabolism; bacteriochlorophyll biosynthesis (light-independent). In terms of biological role, component of the dark-operative protochlorophyllide reductase (DPOR) that uses Mg-ATP and reduced ferredoxin to reduce ring D of protochlorophyllide (Pchlide) to form chlorophyllide a (Chlide). This reaction is light-independent. The NB-protein (BchN-BchB) is the catalytic component of the complex. The protein is Light-independent protochlorophyllide reductase subunit B of Chlorobium phaeovibrioides (strain DSM 265 / 1930) (Prosthecochloris vibrioformis (strain DSM 265)).